Consider the following 311-residue polypeptide: Delta(1)-pyrroline-2-carboxylate reductase 2 (311 aa).

This sequence belongs to the ornithine cyclodeaminase/mu-crystallin family.

It catalyses the reaction L-proline + NAD(+) = 1-pyrroline-2-carboxylate + NADH + H(+). The enzyme catalyses L-proline + NADP(+) = 1-pyrroline-2-carboxylate + NADPH + H(+). Functionally, catalyzes the reduction of Delta(1)-pyrroline-2-carboxylate (Pyr2C) to L-proline, using preferentially NADPH over NADH as the electron donor. May be involved in a degradation pathway that converts trans-3-hydroxy-L-proline (t3LHyp) to L-proline. The polypeptide is Delta(1)-pyrroline-2-carboxylate reductase 2 (Burkholderia ambifaria (strain ATCC BAA-244 / DSM 16087 / CCUG 44356 / LMG 19182 / AMMD) (Burkholderia cepacia (strain AMMD))).